The chain runs to 494 residues: Alpha-amylase-related protein (494 aa).

The N-terminal stretch at 1 to 20 is a signal peptide; it reads MFKFAAAVILCLVAASSTLA. Gln-21 is modified (pyrrolidone carboxylic acid). Residues Cys-48 and Cys-104 are joined by a disulfide bond. 3 residues coordinate Ca(2+): Asn-118, Gln-169, and Asp-178. A disulfide bridge connects residues Cys-157 and Cys-171. Chloride is bound at residue Arg-206. Residue Asp-208 is the Nucleophile of the active site. His-212 is a Ca(2+) binding site. Glu-245 (proton donor) is an active-site residue. Positions 308 and 343 each coordinate chloride. 3 disulfides stabilise this stretch: Cys-376-Cys-382, Cys-418-Cys-441, and Cys-448-Cys-460.

Belongs to the glycosyl hydrolase 13 family. Monomer. It depends on Ca(2+) as a cofactor. Requires chloride as cofactor.

The protein localises to the secreted. The enzyme catalyses Endohydrolysis of (1-&gt;4)-alpha-D-glucosidic linkages in polysaccharides containing three or more (1-&gt;4)-alpha-linked D-glucose units.. This chain is Alpha-amylase-related protein (Amyrel), found in Drosophila atripex (Fruit fly).